The chain runs to 433 residues: PBSX phage terminase large subunit (433 aa).

It to B.subtilis YqaT and phage SPP1 terminase large subunit. As to quaternary structure, dimer of a small and a large subunit.

Functions as a terminase. The protein is PBSX phage terminase large subunit (xtmB) of Bacillus subtilis (strain 168).